A 376-amino-acid polypeptide reads, in one-letter code: Glutamate 5-kinase (376 aa).

An ATP-binding site is contributed by Lys-15. Positions 56, 143, and 155 each coordinate substrate. Position 175 to 176 (175 to 176 (SD)) interacts with ATP. A PUA domain is found at 281-358 (KGTLTIDAGA…PDVMMILGIS (78 aa)).

It belongs to the glutamate 5-kinase family.

It localises to the cytoplasm. The enzyme catalyses L-glutamate + ATP = L-glutamyl 5-phosphate + ADP. It functions in the pathway amino-acid biosynthesis; L-proline biosynthesis; L-glutamate 5-semialdehyde from L-glutamate: step 1/2. Catalyzes the transfer of a phosphate group to glutamate to form L-glutamate 5-phosphate. The chain is Glutamate 5-kinase from Rhodopseudomonas palustris (strain BisB5).